The primary structure comprises 183 residues: Ribulose bisphosphate carboxylase small subunit, chloroplastic 3 (183 aa).

The N-terminal 57 residues, 1–57 (MASSLMSNAATTMAAATTTAQANMVAPFNGLKSVSAFPVTRKNNDITSVASNGGRVQ), are a transit peptide targeting the chloroplast.

This sequence belongs to the RuBisCO small chain family. In terms of assembly, heterohexadecamer of 8 large and 8 small subunits.

Its subcellular location is the plastid. It is found in the chloroplast. Functionally, ruBisCO catalyzes two reactions: the carboxylation of D-ribulose 1,5-bisphosphate, the primary event in carbon dioxide fixation, as well as the oxidative fragmentation of the pentose substrate. Both reactions occur simultaneously and in competition at the same active site. Although the small subunit is not catalytic it is essential for maximal activity. This Mesembryanthemum crystallinum (Common ice plant) protein is Ribulose bisphosphate carboxylase small subunit, chloroplastic 3.